The following is a 675-amino-acid chain: PTS system glucose-specific EIICBA component (675 aa).

Residues 3 to 414 (KKFFGQLQRI…FNFKTPGRED (412 aa)) form the PTS EIIC type-1 domain. 11 helical membrane-spanning segments follow: residues 16 to 36 (LMLP…GNAF), 63 to 83 (AGGI…AIGL), 89 to 109 (VAAI…GMFL), 126 to 146 (VLGI…GALA), 170 to 190 (FVPI…AIIW), 199 to 219 (AFSE…FGFI), 273 to 293 (FMQG…LAIY), 303 to 323 (VVAG…ITEP), 329 to 349 (LFVA…SFLI), 355 to 375 (LHLG…GILP), and 383 to 403 (VIPV…FLIV). The PTS EIIB type-1 domain occupies 425-506 (SELPFKVLDA…QQIMDGKITS (82 aa)). Catalysis depends on Cys-447, which acts as the Phosphocysteine intermediate; for EIIB activity. Residues 547–651 (DKVFSEKMMG…STITPIVVTN (105 aa)) form the PTS EIIA type-1 domain. The active-site Tele-phosphohistidine intermediate; for EIIA activity is His-599.

It localises to the cell membrane. The enzyme catalyses N(pros)-phospho-L-histidyl-[protein] + D-glucose(out) = D-glucose 6-phosphate(in) + L-histidyl-[protein]. With respect to regulation, inhibited by 2-deoxyglucose and methyl beta-D-glucoside, but not by methyl alpha-D-glucoside, p-nitrophenyl alpha-D-glucoside, o-nitrophenyl beta-D-glucoside and salicin. The phosphoenolpyruvate-dependent sugar phosphotransferase system (sugar PTS), a major carbohydrate active transport system, catalyzes the phosphorylation of incoming sugar substrates concomitantly with their translocation across the cell membrane. This system is involved in glucose transport. Cannot transport galactose, fructose, mannose, cellobiose, sucrose, maltose, lactose, melibiose and trehalose, as well as N-acetylglucosamine. The sequence is that of PTS system glucose-specific EIICBA component (ptsG) from Staphylococcus carnosus (strain TM300).